The sequence spans 209 residues: Redox-sensing transcriptional repressor Rex (209 aa).

The segment at residues 16 to 55 (LYYRFIQNLSLSGKQRVSSAELSEAVKVDSATIRRDFSYF) is a DNA-binding region (H-T-H motif). 90 to 95 (GVGNLG) is a binding site for NAD(+).

The protein belongs to the transcriptional regulatory Rex family. In terms of assembly, homodimer.

Its subcellular location is the cytoplasm. Modulates transcription in response to changes in cellular NADH/NAD(+) redox state. This Bacillus thuringiensis (strain Al Hakam) protein is Redox-sensing transcriptional repressor Rex.